The chain runs to 91 residues: Small ribosomal subunit protein bS20 (91 aa).

The segment at 1 to 23 is disordered; sequence MANTSSAKKATRKIARRTEVNKA.

The protein belongs to the bacterial ribosomal protein bS20 family.

In terms of biological role, binds directly to 16S ribosomal RNA. This is Small ribosomal subunit protein bS20 from Rhizobium rhizogenes (strain K84 / ATCC BAA-868) (Agrobacterium radiobacter).